We begin with the raw amino-acid sequence, 430 residues long: Trigger factor (430 aa).

Residues Gly-163–Pro-248 enclose the PPIase FKBP-type domain.

Belongs to the FKBP-type PPIase family. Tig subfamily.

The protein resides in the cytoplasm. It carries out the reaction [protein]-peptidylproline (omega=180) = [protein]-peptidylproline (omega=0). In terms of biological role, involved in protein export. Acts as a chaperone by maintaining the newly synthesized protein in an open conformation. Functions as a peptidyl-prolyl cis-trans isomerase. The polypeptide is Trigger factor (Exiguobacterium sibiricum (strain DSM 17290 / CCUG 55495 / CIP 109462 / JCM 13490 / 255-15)).